A 1477-amino-acid chain; its full sequence is Neuralized-like protein 4 (1477 aa).

Disordered stretches follow at residues 1-26 (MAEL…RKQP) and 168-196 (QPPP…RPDK). The NHR 1 domain occupies 1–167 (MAELHPRTGK…KCTQITVLSC (167 aa)). The segment covering 171–183 (PEEEEEEDAEEQE) has biased composition (acidic residues). 4 consecutive NHR domains span residues 250–417 (ALLF…IVHN), 450–616 (QLLF…IMDE), 645–813 (DLRF…LTGG), and 841–1010 (SHRF…TVSS). The disordered stretch occupies residues 1012–1041 (LLEEPDATKPPSITSESEEEEDPADHGDPH). In terms of domain architecture, NHR 6 spans 1048–1211 (SLQFLANHGK…QCEQVSIVTG (164 aa)).

Post-translationally, ubiquitinated. This ubiquitination leads to proteasomal degradation.

It localises to the cytoplasm. The protein localises to the cytoskeleton. Its subcellular location is the microtubule organizing center. The protein resides in the centrosome. It is found in the centriole. Promotes CCP110 ubiquitination and proteasome-dependent degradation. By counteracting accumulation of CP110, maintains normal centriolar homeostasis and preventing formation of ectopic microtubular organizing centers. The protein is Neuralized-like protein 4 (neurl4) of Xenopus tropicalis (Western clawed frog).